The chain runs to 432 residues: Enolase (432 aa).

Gln-167 contributes to the (2R)-2-phosphoglycerate binding site. Residue Glu-209 is the Proton donor of the active site. Positions 246, 291, and 318 each coordinate Mg(2+). 4 residues coordinate (2R)-2-phosphoglycerate: Lys-343, Arg-372, Ser-373, and Lys-394. Catalysis depends on Lys-343, which acts as the Proton acceptor.

The protein belongs to the enolase family. Component of the RNA degradosome, a multiprotein complex involved in RNA processing and mRNA degradation. Requires Mg(2+) as cofactor.

It is found in the cytoplasm. The protein resides in the secreted. It localises to the cell surface. The catalysed reaction is (2R)-2-phosphoglycerate = phosphoenolpyruvate + H2O. Its pathway is carbohydrate degradation; glycolysis; pyruvate from D-glyceraldehyde 3-phosphate: step 4/5. Its function is as follows. Catalyzes the reversible conversion of 2-phosphoglycerate (2-PG) into phosphoenolpyruvate (PEP). It is essential for the degradation of carbohydrates via glycolysis. This chain is Enolase, found in Colwellia psychrerythraea (strain 34H / ATCC BAA-681) (Vibrio psychroerythus).